The primary structure comprises 1296 residues: Clustered mitochondria protein homolog (1296 aa).

The segment at 1-31 is disordered; the sequence is MTLMNGDGAHEHQAEAEPKQNGHEMGDQTEE. Positions 8–26 are enriched in basic and acidic residues; the sequence is GAHEHQAEAEPKQNGHEMG. Positions 333-575 constitute a Clu domain; that stretch reads RAEDAYTSRL…RTFPPDLNFL (243 aa). A coiled-coil region spans residues 662 to 689; sequence LDGEAQLKQLEETMAAHKETVDTRSKEV. 4 TPR repeats span residues 970 to 1003, 1012 to 1045, 1096 to 1129, and 1138 to 1171; these read AFHF…FNNV, CACL…SERI, ALLD…NSKY, and ALSH…YKNQ. A coiled-coil region spans residues 1242 to 1274; it reads QKDLEHLKAEVQRRQQLQEAIKGAENHEAKTKE. The interval 1261 to 1296 is disordered; that stretch reads AIKGAENHEAKTKEPEMSETSDSNINAASVAPESSD. A compositionally biased stretch (basic and acidic residues) spans 1263–1276; sequence KGAENHEAKTKEPE. The span at 1278 to 1296 shows a compositional bias: polar residues; that stretch reads SETSDSNINAASVAPESSD.

This sequence belongs to the CLU family.

It is found in the cytoplasm. The protein localises to the cytoplasmic granule. Its function is as follows. mRNA-binding protein involved in proper cytoplasmic distribution of mitochondria. Specifically binds mRNAs of nuclear-encoded mitochondrial proteins in the cytoplasm and regulates transport or translation of these transcripts close to mitochondria, playing a role in mitochondrial biogenesis. This chain is Clustered mitochondria protein homolog, found in Xenopus tropicalis (Western clawed frog).